The following is a 364-amino-acid chain: Protein RecA (364 aa).

77-84 serves as a coordination point for ATP; the sequence is GPESSGKT. The segment at 343–364 is disordered; it reads DRFLQNGGPDPDDGDGDATAEM. Residues 352 to 364 are compositionally biased toward acidic residues; that stretch reads DPDDGDGDATAEM.

It belongs to the RecA family.

The protein localises to the cytoplasm. Functionally, can catalyze the hydrolysis of ATP in the presence of single-stranded DNA, the ATP-dependent uptake of single-stranded DNA by duplex DNA, and the ATP-dependent hybridization of homologous single-stranded DNAs. It interacts with LexA causing its activation and leading to its autocatalytic cleavage. This Rhizobium johnstonii (strain DSM 114642 / LMG 32736 / 3841) (Rhizobium leguminosarum bv. viciae) protein is Protein RecA.